We begin with the raw amino-acid sequence, 388 residues long: Probable peptidoglycan glycosyltransferase FtsW (388 aa).

The next 11 helical transmembrane spans lie at 16–36 (LVLIVLALITIGLVMVLSSSV), 54–74 (VFALGVGGLFAALVLMVPSQS), 82–102 (WFLLGLVLLALVLIFGREIGG), 109–129 (LVVMNFQPAEWMKIATILFLA), 144–164 (TAVIRLFLPFGIMAGLLLLQP), 167–187 (GTTVLIAGVLVGMLFIAGAPF), 189–209 (YFVITVLPIGAILAVLLINSP), 233–253 (SQALMAIGSGGITGSGLGASV), 277–297 (WLGVVILLSLYGLLLWRMFAV), 310–330 (ALVVYGVAIMFAGQLLINVGV), and 342–362 (LPFVSYGGSSLMMALLAIGLV).

The protein belongs to the SEDS family. FtsW subfamily.

The protein localises to the cell inner membrane. The catalysed reaction is [GlcNAc-(1-&gt;4)-Mur2Ac(oyl-L-Ala-gamma-D-Glu-L-Lys-D-Ala-D-Ala)](n)-di-trans,octa-cis-undecaprenyl diphosphate + beta-D-GlcNAc-(1-&gt;4)-Mur2Ac(oyl-L-Ala-gamma-D-Glu-L-Lys-D-Ala-D-Ala)-di-trans,octa-cis-undecaprenyl diphosphate = [GlcNAc-(1-&gt;4)-Mur2Ac(oyl-L-Ala-gamma-D-Glu-L-Lys-D-Ala-D-Ala)](n+1)-di-trans,octa-cis-undecaprenyl diphosphate + di-trans,octa-cis-undecaprenyl diphosphate + H(+). It participates in cell wall biogenesis; peptidoglycan biosynthesis. Functionally, peptidoglycan polymerase that is essential for cell division. This is Probable peptidoglycan glycosyltransferase FtsW from Thiomicrospira cyclica (strain DSM 14477 / JCM 11371 / ALM1) (Thioalkalimicrobium cyclicum).